A 476-amino-acid chain; its full sequence is Chromosomal replication initiator protein DnaA (476 aa).

The domain I, interacts with DnaA modulators stretch occupies residues methionine 1–arginine 75. Residues arginine 75–threonine 139 are domain II. Positions phenylalanine 110 to leucine 141 are disordered. The span at alanine 120–proline 138 shows a compositional bias: basic and acidic residues. The domain III, AAA+ region stretch occupies residues arginine 140 to serine 356. The ATP site is built by glycine 184, glycine 186, lysine 187, and threonine 188. A domain IV, binds dsDNA region spans residues arginine 357–glycine 476.

Belongs to the DnaA family. In terms of assembly, oligomerizes as a right-handed, spiral filament on DNA at oriC.

It is found in the cytoplasm. Functionally, plays an essential role in the initiation and regulation of chromosomal replication. ATP-DnaA binds to the origin of replication (oriC) to initiate formation of the DNA replication initiation complex once per cell cycle. Binds the DnaA box (a 9 base pair repeat at the origin) and separates the double-stranded (ds)DNA. Forms a right-handed helical filament on oriC DNA; dsDNA binds to the exterior of the filament while single-stranded (ss)DNA is stabiized in the filament's interior. The ATP-DnaA-oriC complex binds and stabilizes one strand of the AT-rich DNA unwinding element (DUE), permitting loading of DNA polymerase. After initiation quickly degrades to an ADP-DnaA complex that is not apt for DNA replication. Binds acidic phospholipids. This chain is Chromosomal replication initiator protein DnaA, found in Nitrosospira multiformis (strain ATCC 25196 / NCIMB 11849 / C 71).